Here is a 108-residue protein sequence, read N- to C-terminus: UPF0145 protein Acel_2109 (108 aa).

The protein belongs to the UPF0145 family.

The chain is UPF0145 protein Acel_2109 from Acidothermus cellulolyticus (strain ATCC 43068 / DSM 8971 / 11B).